The following is a 92-amino-acid chain: Trp operon repressor homolog (92 aa).

The DNA-binding element occupies 56 to 79 (QREVASKLGVSITKITRGAANLQD).

It belongs to the TrpR family. As to quaternary structure, homodimer.

It is found in the cytoplasm. This protein is an aporepressor. When complexed with L-tryptophan it binds the operator region of the trp operon and prevents the initiation of transcription. The chain is Trp operon repressor homolog from Xylella fastidiosa (strain M23).